A 161-amino-acid chain; its full sequence is UPF0225 protein HI_0277 (161 aa).

The protein belongs to the UPF0225 family.

The protein is UPF0225 protein HI_0277 of Haemophilus influenzae (strain ATCC 51907 / DSM 11121 / KW20 / Rd).